The primary structure comprises 241 residues: Demethylmenaquinone methyltransferase (241 aa).

S-adenosyl-L-methionine is bound by residues T73 and D92.

This sequence belongs to the class I-like SAM-binding methyltransferase superfamily. MenG/UbiE family.

The catalysed reaction is a 2-demethylmenaquinol + S-adenosyl-L-methionine = a menaquinol + S-adenosyl-L-homocysteine + H(+). It participates in quinol/quinone metabolism; menaquinone biosynthesis; menaquinol from 1,4-dihydroxy-2-naphthoate: step 2/2. Functionally, methyltransferase required for the conversion of demethylmenaquinol (DMKH2) to menaquinol (MKH2). The protein is Demethylmenaquinone methyltransferase of Chlorobaculum parvum (strain DSM 263 / NCIMB 8327) (Chlorobium vibrioforme subsp. thiosulfatophilum).